Consider the following 389-residue polypeptide: Large envelope protein (389 aa).

Methionine 1 bears the N-acetylmethionine mark. The N-myristoyl glycine; by host moiety is linked to residue glycine 2. The pre-S1 stretch occupies residues 2-108 (GQNLSTSNPL…PPLRDTHPQA (107 aa)). Residues 2–163 (GQNLSTSNPL…FSRTGDPAPN (162 aa)) form a pre-S region. At 2 to 170 (GQNLSTSNPL…APNMESITSG (169 aa)) the chain is on the virion surface; in external conformation side. At 2 to 242 (GQNLSTSNPL…PGYRWMCLRR (241 aa)) the chain is on the intravirion; in internal conformation side. The tract at residues 73 to 99 (IITTVPANPPPASTNRQSGRKPTPISP) is disordered. Residues 109–163 (MHWNSTTFHQALQDPRVRGLYFPAGGSSSGTAYPVPDTASHISSIFSRTGDPAPN) form a pre-S2 region. A helical transmembrane segment spans residues 171–191 (FLGPLLVLQAGFFLLTKILTI). The Intravirion; in external conformation segment spans residues 192-242 (PQSLDSWWTSLNFLGGAPVCLGQNSQSPTSNHSPTSCPPICPGYRWMCLRR). The helical transmembrane segment at 243–263 (FIIFLFILLLCLIFLLVLLDY) threads the bilayer. Residues 264–337 (QGMLPVCPLI…WASVRFSWLS (74 aa)) lie on the Virion surface side of the membrane. A glycan (N-linked (GlcNAc...) asparagine; by host) is linked at asparagine 309. Residues 338–358 (LLAPFVQWFAGLSPTVWLSVI) form a helical membrane-spanning segment. Over 359-364 (WMMWYW) the chain is Intravirion. The helical transmembrane segment at 365–387 (GPNLYNILSPFIPLLPIFFCLWV) threads the bilayer. The Virion surface segment spans residues 388–389 (YI).

It belongs to the orthohepadnavirus major surface antigen family. In its internal form (Li-HBsAg), interacts with the capsid protein and with the isoform S. Interacts with host chaperone CANX. As to quaternary structure, associates with host chaperone CANX through its pre-S2 N glycan; this association may be essential for isoform M proper secretion. In terms of assembly, interacts with isoform L. Interacts with the antigens of satellite virus HDV (HDVAgs); this interaction is required for encapsidation of HDV genomic RNA. Post-translationally, isoform M is N-terminally acetylated by host at a ratio of 90%, and N-glycosylated by host at the pre-S2 region. In terms of processing, myristoylated.

The protein resides in the virion membrane. The large envelope protein exists in two topological conformations, one which is termed 'external' or Le-HBsAg and the other 'internal' or Li-HBsAg. In its external conformation the protein attaches the virus to cell receptors and thereby initiating infection. This interaction determines the species specificity and liver tropism. This attachment induces virion internalization predominantly through caveolin-mediated endocytosis. The large envelope protein also assures fusion between virion membrane and endosomal membrane. In its internal conformation the protein plays a role in virion morphogenesis and mediates the contact with the nucleocapsid like a matrix protein. Its function is as follows. The middle envelope protein plays an important role in the budding of the virion. It is involved in the induction of budding in a nucleocapsid independent way. In this process the majority of envelope proteins bud to form subviral lipoprotein particles of 22 nm of diameter that do not contain a nucleocapsid. This Gorilla gorilla (western gorilla) protein is Large envelope protein.